The sequence spans 379 residues: MNFTPALLALEDGSLFHGISIGAPGQTVGEVVFNTAMTGYQEILTDPSYARQIVTLTYPHIGNTGVNPEDEESAGVHAAGLVIRDLPPLVSSWRSRESLPDYLTRFGVVAIANIDTRRLTRILREKGAQNGCIMAGEIDEQAALAAARGFPGLKGMDLAKEVSTAEIYDWTEGTWQLGSGHAPAPASSPYKVVAYDFGVKRNILRMLVDRGCQVTVVPAQTPAAQVLAMQPDGVFLSNGPGDPEPCDYAISAIREIVDTGIPTYGICLGHQLLGLASGARTVKMKFGHHGANHPVQDLDSKRVMISSQNHGFAVDENTLPGNVKATHRSLFDGTLQGIARTDRPAFSFQGHPEASPGPHDVAPLFDRFIELMKPQGVRK.

The tract at residues 1 to 187 (MNFTPALLAL…GSGHAPAPAS (187 aa)) is CPSase. The L-glutamine site is built by Ser48, Gly239, and Gly241. One can recognise a Glutamine amidotransferase type-1 domain in the interval 191–378 (KVVAYDFGVK…IELMKPQGVR (188 aa)). Cys267 functions as the Nucleophile in the catalytic mechanism. Residues Leu268, Gln271, Asn309, Gly311, and Phe312 each contribute to the L-glutamine site. Residues His351 and Glu353 contribute to the active site.

Belongs to the CarA family. Composed of two chains; the small (or glutamine) chain promotes the hydrolysis of glutamine to ammonia, which is used by the large (or ammonia) chain to synthesize carbamoyl phosphate. Tetramer of heterodimers (alpha,beta)4.

The enzyme catalyses hydrogencarbonate + L-glutamine + 2 ATP + H2O = carbamoyl phosphate + L-glutamate + 2 ADP + phosphate + 2 H(+). It catalyses the reaction L-glutamine + H2O = L-glutamate + NH4(+). The protein operates within amino-acid biosynthesis; L-arginine biosynthesis; carbamoyl phosphate from bicarbonate: step 1/1. Its pathway is pyrimidine metabolism; UMP biosynthesis via de novo pathway; (S)-dihydroorotate from bicarbonate: step 1/3. Its function is as follows. Small subunit of the glutamine-dependent carbamoyl phosphate synthetase (CPSase). CPSase catalyzes the formation of carbamoyl phosphate from the ammonia moiety of glutamine, carbonate, and phosphate donated by ATP, constituting the first step of 2 biosynthetic pathways, one leading to arginine and/or urea and the other to pyrimidine nucleotides. The small subunit (glutamine amidotransferase) binds and cleaves glutamine to supply the large subunit with the substrate ammonia. The chain is Carbamoyl phosphate synthase small chain from Thioalkalivibrio sulfidiphilus (strain HL-EbGR7).